The following is a 469-amino-acid chain: Cysteine--tRNA ligase (469 aa).

Position 28 (Cys28) interacts with Zn(2+). The short motif at 30–40 (PTVYNYIHIGN) is the 'HIGH' region element. Residues Cys213, His238, and Glu242 each coordinate Zn(2+). Residues 270-274 (KMSKS) carry the 'KMSKS' region motif. Lys273 is an ATP binding site.

Belongs to the class-I aminoacyl-tRNA synthetase family. In terms of assembly, monomer. The cofactor is Zn(2+).

It is found in the cytoplasm. It catalyses the reaction tRNA(Cys) + L-cysteine + ATP = L-cysteinyl-tRNA(Cys) + AMP + diphosphate. This chain is Cysteine--tRNA ligase, found in Leuconostoc citreum (strain KM20).